Here is a 155-residue protein sequence, read N- to C-terminus: Cytochrome P450 (155 aa).

A heme-binding site is contributed by Cys99.

Belongs to the cytochrome P450 family. Heme serves as cofactor.

In Helianthus annuus (Common sunflower), this protein is Cytochrome P450.